Consider the following 122-residue polypeptide: uncharacterized protein (122 aa).

The protein resides in the mitochondrion. This is an uncharacterized protein from Arabidopsis thaliana (Mouse-ear cress).